A 128-amino-acid chain; its full sequence is Sulfurtransferase TusD (128 aa).

Cys-78 serves as the catalytic Cysteine persulfide intermediate.

This sequence belongs to the DsrE/TusD family. Heterohexamer, formed by a dimer of trimers. The hexameric TusBCD complex contains 2 copies each of TusB, TusC and TusD. The TusBCD complex interacts with TusE.

Its subcellular location is the cytoplasm. In terms of biological role, part of a sulfur-relay system required for 2-thiolation of 5-methylaminomethyl-2-thiouridine (mnm(5)s(2)U) at tRNA wobble positions. Accepts sulfur from TusA and transfers it in turn to TusE. This Salmonella newport (strain SL254) protein is Sulfurtransferase TusD.